An 84-amino-acid chain; its full sequence is Envelope small membrane protein (84 aa).

At 1-18 (MFMADAYLADTVWYVGQI) the chain is on the virion surface side. A helical transmembrane segment spans residues 19 to 39 (IFIVAICLLVIIVVVAFLATF). Residues 40–80 (KLCIQLCGMCNTLVLSPSIYVFNRGRQFYEFYNDVKPPVLD) lie on the Intravirion side of the membrane.

The protein belongs to the betacoronaviruses E protein family. Homopentamer. Interacts with membrane protein M in the budding compartment of the host cell, which is located between endoplasmic reticulum and the Golgi complex. Interacts with Nucleoprotein.

It is found in the host Golgi apparatus membrane. Plays a central role in virus morphogenesis and assembly. Acts as a viroporin and self-assembles in host membranes forming pentameric protein-lipid pores that allow ion transport. Also plays a role in the induction of apoptosis. This Porcine hemagglutinating encephalomyelitis virus (strain 67N) (HEV-67N) protein is Envelope small membrane protein.